The sequence spans 556 residues: Glucose-6-phosphate isomerase (556 aa).

The Proton donor role is filled by E363. Catalysis depends on residues H394 and K522.

This sequence belongs to the GPI family.

The protein localises to the cytoplasm. The catalysed reaction is alpha-D-glucose 6-phosphate = beta-D-fructose 6-phosphate. The protein operates within carbohydrate biosynthesis; gluconeogenesis. It functions in the pathway carbohydrate degradation; glycolysis; D-glyceraldehyde 3-phosphate and glycerone phosphate from D-glucose: step 2/4. Catalyzes the reversible isomerization of glucose-6-phosphate to fructose-6-phosphate. The chain is Glucose-6-phosphate isomerase from Frankia casuarinae (strain DSM 45818 / CECT 9043 / HFP020203 / CcI3).